We begin with the raw amino-acid sequence, 188 residues long: 3-deoxy-D-manno-octulosonate 8-phosphate phosphatase KdsC (188 aa).

Residues aspartate 32 and aspartate 34 each coordinate Mg(2+). Substrate contacts are provided by residues aspartate 34, 55-59 (NVRDG), arginine 63, arginine 78, arginine 86, and lysine 102. Aspartate 125 is a binding site for Mg(2+).

The protein belongs to the KdsC family. As to quaternary structure, homotetramer. The cofactor is Mg(2+).

The enzyme catalyses 3-deoxy-alpha-D-manno-2-octulosonate-8-phosphate + H2O = 3-deoxy-alpha-D-manno-oct-2-ulosonate + phosphate. The protein operates within carbohydrate biosynthesis; 3-deoxy-D-manno-octulosonate biosynthesis; 3-deoxy-D-manno-octulosonate from D-ribulose 5-phosphate: step 3/3. It functions in the pathway bacterial outer membrane biogenesis; lipopolysaccharide biosynthesis. Catalyzes the hydrolysis of 3-deoxy-D-manno-octulosonate 8-phosphate (KDO 8-P) to 3-deoxy-D-manno-octulosonate (KDO) and inorganic phosphate. The chain is 3-deoxy-D-manno-octulosonate 8-phosphate phosphatase KdsC from Escherichia coli (strain K12).